We begin with the raw amino-acid sequence, 441 residues long: Histidine--tRNA ligase (441 aa).

Belongs to the class-II aminoacyl-tRNA synthetase family. In terms of assembly, homodimer.

The protein localises to the cytoplasm. The enzyme catalyses tRNA(His) + L-histidine + ATP = L-histidyl-tRNA(His) + AMP + diphosphate + H(+). The sequence is that of Histidine--tRNA ligase from Synechococcus sp. (strain WH7803).